The sequence spans 171 residues: Adenine phosphoribosyltransferase (171 aa).

This sequence belongs to the purine/pyrimidine phosphoribosyltransferase family. As to quaternary structure, homodimer.

It is found in the cytoplasm. The catalysed reaction is AMP + diphosphate = 5-phospho-alpha-D-ribose 1-diphosphate + adenine. It functions in the pathway purine metabolism; AMP biosynthesis via salvage pathway; AMP from adenine: step 1/1. Its function is as follows. Catalyzes a salvage reaction resulting in the formation of AMP, that is energically less costly than de novo synthesis. This chain is Adenine phosphoribosyltransferase, found in Geotalea daltonii (strain DSM 22248 / JCM 15807 / FRC-32) (Geobacter daltonii).